A 549-amino-acid polypeptide reads, in one-letter code: TBC1 domain family member 3I (549 aa).

The Rab-GAP TBC domain maps to 101–293; sequence GMPMNIRGPM…RLWDVYLVEG (193 aa). Residues C318 and C325 are each lipidated (S-palmitoyl cysteine). Disordered stretches follow at residues 350–443 and 507–526; these read LTRK…QGGP and AAPS…DEQQ. Positions 398 to 417 are enriched in low complexity; the sequence is PRPIWSASPPRAPRSSTPCP.

Ubiquitinated by a CUL7-based E3 ligase, which leads to proteasomal degradation. Post-translationally, palmitoylation is required for membrane localization and protects TBC1D3 from ubiquitination.

Its subcellular location is the cell membrane. Functionally, acts as a GTPase activating protein for RAB5. Does not act on RAB4 or RAB11. The protein is TBC1 domain family member 3I of Homo sapiens (Human).